A 522-amino-acid chain; its full sequence is Sorting nexin-1 (522 aa).

Disordered stretches follow at residues 1-84 and 115-142; these read MASG…QDQE and SLPP…QEDQ. A phosphoserine mark is found at Ser32 and Ser39. Over residues 35–45 the composition is skewed to acidic residues; it reads EAGDSDTEGED. Thr41 and Thr48 each carry phosphothreonine. The span at 55–73 shows a compositional bias: polar residues; it reads KHQSPKITTSLLPINNGSK. Ser58 and Ser72 each carry phosphoserine. Residues 132–142 show a composition bias toward acidic residues; that stretch reads EELEEEEQEDQ. Positions 143–272 constitute a PX domain; it reads FDLTVGITDP…EFLEKEELPR (130 aa). Residues Arg186, Ser188, and Lys214 each coordinate a 1,2-diacyl-sn-glycero-3-phospho-(1D-myo-inositol-3-phosphate). The residue at position 188 (Ser188) is a Phosphoserine. Position 237 is an N6-acetyllysine (Lys237). Residue Arg238 participates in a 1,2-diacyl-sn-glycero-3-phospho-(1D-myo-inositol-3-phosphate) binding. Ser280 carries the post-translational modification Phosphoserine. The segment at 281–298 is membrane-binding amphipathic helix; it reads GAGLLKMFNKATDAVSKM. One can recognise a BAR domain in the interval 302–522; the sequence is MNESDIWFEE…AFLPEAKAIS (221 aa).

Belongs to the sorting nexin family. In terms of assembly, predominantly forms heterodimers with BAR domain-containing sorting nexins SNX5, SNX6 and SNX32; can self-associate to form homodimers. The heterodimers are proposed to self-assemble into helical arrays on the membrane to stabilize and expand local membrane curvature underlying endosomal tubule formation. Thought to be a component of the originally described retromer complex (also called SNX-BAR retromer) which is a pentamer containing the heterotrimeric retromer cargo-selective complex (CSC), also described as vacuolar protein sorting subcomplex (VPS) and a heterodimeric membrane-deforming subcomplex formed between SNX1 or SNX2 and SNX5 or SNX6 (also called SNX-BAR subcomplex); the respective CSC and SNX-BAR subcomplexes associate with low affinity. Interacts with SNX5, SNX6, SNX32, VPS26A, VPS29, VPS35, DRD5, DENND5A, KALRN, RHOG (GDP-bound form). The interaction with SNX2 is reported controversially. Interacts with DNAJC13; prevented by presence of HGS. Interacts with HGS.

The protein localises to the endosome membrane. The protein resides in the golgi apparatus. It is found in the trans-Golgi network membrane. It localises to the early endosome membrane. Its subcellular location is the cell projection. The protein localises to the lamellipodium. Its function is as follows. Involved in several stages of intracellular trafficking. Interacts with membranes containing phosphatidylinositol 3-phosphate (PtdIns(3P)) or phosphatidylinositol 3,5-bisphosphate (PtdIns(3,5)P2). Acts in part as component of the retromer membrane-deforming SNX-BAR subcomplex. The SNX-BAR retromer mediates retrograde transport of cargo proteins from endosomes to the trans-Golgi network (TGN) and is involved in endosome-to-plasma membrane transport for cargo protein recycling. The SNX-BAR subcomplex functions to deform the donor membrane into a tubular profile called endosome-to-TGN transport carrier (ETC). Can sense membrane curvature and has in vitro vesicle-to-membrane remodeling activity. Involved in retrograde endosome-to-TGN transport of lysosomal enzyme receptors (IGF2R, M6PR and SORT1) and Shiginella dysenteria toxin stxB. Plays a role in targeting ligand-activated EGFR to the lysosomes for degradation after endocytosis from the cell surface and release from the Golgi. Involvement in retromer-independent endocytic trafficking of P2RY1 and lysosomal degradation of protease-activated receptor-1/F2R. Promotes KALRN- and RHOG-dependent but retromer-independent membrane remodeling such as lamellipodium formation; the function is dependent on GEF activity of KALRN. Required for endocytosis of DRD5 upon agonist stimulation but not for basal receptor trafficking. The protein is Sorting nexin-1 (SNX1) of Homo sapiens (Human).